A 226-amino-acid polypeptide reads, in one-letter code: GTP-binding nuclear protein Ran (226 aa).

A Small GTPase Ran-type domain is found at 3 to 184; the sequence is DPISFKVILV…LSILRTLLND (182 aa). Residue 14 to 21 participates in GTP binding; it reads DGATGKTT. The tract at residues 33 to 41 is switch-I; that stretch reads KQYISTIGV. Residues glycine 70, 135–138, and 163–165 contribute to the GTP site; these read NKCD and SAK. Residues 70–86 are switch-II; that stretch reads GQEKFGGLRDGYYVDSD.

The protein belongs to the small GTPase superfamily. Ran family. In terms of assembly, found in a nuclear export complex with RanGTP, exportin and pre-miRNA.

The protein resides in the nucleus. Functionally, GTP-binding protein involved in nucleocytoplasmic transport. Required for the import of protein into the nucleus and also for RNA export. Involved in chromatin condensation and control of cell cycle. The sequence is that of GTP-binding nuclear protein Ran from Giardia intestinalis (Giardia lamblia).